Reading from the N-terminus, the 1396-residue chain is MPPPLLPKRSKLETEKAQSNKITPREEQQSEKIGKSNHAASSSSSSTQGAVKRRSVFEDVTNASHSQCVQSKEDNIELKSHVSKRTKKGVGEVTQKKIKSSKMGHVTSLSNMEKEFILDIPNKPKTLTTEEPSVFQKTLVLNEEPATKETCLMRKTLKSCAFHQETLLMEKPLTLLVETEDYNEFDTELMTSKKKDKPEDPTIIEEMTDLKKSVIRKVTLTSSPLWLKNKHVVQEEKPVIQEKSSFKRISLVSNVVTTKEKPPVKKPHFRKKKPTTEMKSLLQEPSLEEKYNTQEDASILKKPQVLQENTNNKDATLTEPVTFKGKHSANEATHTKKPSSSKNNPDPQGKGTNLRPLRVHPVTYENEPMSSKKSTTKKKDSHFHGPSVLPDKHSPQMEVSTVKKSLALPNPTTEEKMLHFPVATVLEKQHNMGEAPCLKKPSPLRKQQQLPKRRRFFSNSAVQETVIRKPLFFKMSTTEKDPPSQWPSALPKKHISPGELSKQKKQHVSPKHNMEEDSQCWLDSAFKKQLSREEPASTHTPLKLEMQQAITKETGFHLRNPLVLPTVTSEAKSLTKEPPSFREQNTSLLKRKSTTHTITLQQAQSEWQEMTDEDRNLFSIKPGSHRKEPIPEFLQNPLPPNENCLISQKLSHSMPFASQKTTSQERAHRKESVASNDDKNFFSQDLFSPFSSADEDTLKFHKSLDFQEQVDRKNDSHKKMFDSQDSVSEEESFLRKLFCKDRCSSTEELSQERTVALEQEFLLIKILNENTSSDVDEPLSHQSPHIQNHSDTTKEALEASEALEAPEALETLEALVASEDLEEPLNILEELSTENMVALMKMLVTEDESTKDSFSGNYTAAREAHAEKSLSLEETSINEAATLKESLSSQEKHRAELVTVLKELLVLMKNPSLKRVALAFQENPSNNVETLLREVLALVENSTADESTLQEKPSTKTDVTPKELLALEENSSNKKANPMDSLSFDHKPDTEMGEIARMVLTDEEYNIDTLYERVLALSQGLIAADQLSFTDLQNFEETKIVDEEEFFKSFLVFENKNSPNMSSNAFESRTDNSSAIMPSSKAFNPVENSNPYVSSSKSFKSTLGAKETEITIQDDSDSLERIEKEGQDPLLNTIYAKDVFNYLKEREEKFLVQKYMDGQMELTSDMRAILVDWLVEIQGSFQMTHETLYLAVKIMDLYLMKAQCKKNHLQLLGSTTYMIAAKFEESYPPSLSEFLFICEDMYEKSDMVSLESSILQTLNFDINIPTAYNFLRRYASCIHASMKTLTLSRFICEMTLQEYEYIEERPSKLAAASFILALYMRNLSNCVPTLEYFTGYKMAELHILVRKLNHLLNFRSHSILKNVFEKYSEETYFEVAKIPPLSKQDLENLLNCALFH.

3 disordered regions span residues M1 to S64, K259 to E398, and T477 to L500. Positions S10–G34 are enriched in basic and acidic residues. The D-box signature appears at R54–N62. Over residues V264–K273 the composition is skewed to basic residues. The span at L306–A315 shows a compositional bias: polar residues. The residue at position 703 (S703) is a Phosphoserine. The disordered stretch occupies residues V775 to A796. Residues S780–S790 are compositionally biased toward polar residues.

The protein belongs to the cyclin family. Cyclin AB subfamily. In terms of assembly, interacts with CDK2 kinase. In terms of processing, ubiquitinated. Ubiquitination leads to its degradation during anaphase entry, after degradation of CCNB1. In terms of tissue distribution, expressed in testis. Also expressed in the fetal ovary, but not in the adult.

It localises to the nucleus. Its function is as follows. Cyclins are positive regulatory subunits of the cyclin-dependent kinases (CDKs), and thereby play an essential role in the control of the cell cycle, notably via their destruction during cell division. Its tissue specificity suggest that it may be required during early meiotic prophase I. The chain is G2/mitotic-specific cyclin-B3 (Ccnb3) from Mus musculus (Mouse).